The primary structure comprises 1122 residues: AP-4 complex subunit epsilon-1 (1122 aa).

Ser699 carries the post-translational modification Phosphoserine. Composition is skewed to basic and acidic residues over residues 714–728 (YLPK…KPEA) and 745–760 (TTRK…STEE). Disordered regions lie at residues 714–760 (YLPK…STEE) and 797–861 (SKLK…AEKL). The segment at 726 to 1122 (PEASHVPAEG…CHCQKVMQTS (397 aa)) is interaction with TEPSIN. A compositionally biased stretch (low complexity) spans 841 to 853 (ELSSELFRSESLS). Position 851 is a phosphoserine (Ser851).

Belongs to the adaptor complexes large subunit family. In terms of assembly, adaptor protein complex 4 (AP-4) is a heterotetramer composed of two large adaptins (epsilon-type subunit AP4E1 and beta-type subunit AP4B1), a medium adaptin (mu-type subunit AP4M1) and a small adaptin (sigma-type AP4S1). Interacts with TEPSIN. Interacts with GRIA2; probably indirect it mediates the somatodendritic localization of GRIA2 in neurons.

It localises to the golgi apparatus. The protein localises to the trans-Golgi network membrane. Component of the adaptor protein complex 4 (AP-4). Adaptor protein complexes are vesicle coat components involved both in vesicle formation and cargo selection. They control the vesicular transport of proteins in different trafficking pathways. AP-4 forms a non clathrin-associated coat on vesicles departing the trans-Golgi network (TGN) and may be involved in the targeting of proteins from the trans-Golgi network (TGN) to the endosomal-lysosomal system. It is also involved in protein sorting to the basolateral membrane in epithelial cells and the proper asymmetric localization of somatodendritic proteins in neurons. AP-4 is involved in the recognition and binding of tyrosine-based sorting signals found in the cytoplasmic part of cargos, but may also recognize other types of sorting signal. The sequence is that of AP-4 complex subunit epsilon-1 from Mus musculus (Mouse).